Here is a 571-residue protein sequence, read N- to C-terminus: Peptide-N4-(N-acetyl-beta-glucosaminyl)asparagine amidase A (571 aa).

12 N-linked (GlcNAc...) asparagine glycosylation sites follow: Asn-121, Asn-143, Asn-197, Asn-241, Asn-318, Asn-367, Asn-390, Asn-423, Asn-457, Asn-481, Asn-524, and Asn-529.

In terms of assembly, heterodimer of a large and a small chain. Post-translationally, is highly glycosylated and is largly resistant against self-deglycosylation.

It carries out the reaction Hydrolysis of an N(4)-(acetyl-beta-D-glucosaminyl)asparagine residue in which the glucosamine residue may be further glycosylated, to yield a (substituted) N-acetyl-beta-D-glucosaminylamine and a peptide containing an aspartate residue.. The sequence is that of Peptide-N4-(N-acetyl-beta-glucosaminyl)asparagine amidase A from Prunus dulcis (Almond).